We begin with the raw amino-acid sequence, 444 residues long: UDP-N-acetylmuramate--L-alanine ligase (444 aa).

Residue 110-116 (GAHGKTS) coordinates ATP.

It belongs to the MurCDEF family.

The protein localises to the cytoplasm. The enzyme catalyses UDP-N-acetyl-alpha-D-muramate + L-alanine + ATP = UDP-N-acetyl-alpha-D-muramoyl-L-alanine + ADP + phosphate + H(+). The protein operates within cell wall biogenesis; peptidoglycan biosynthesis. Functionally, cell wall formation. The polypeptide is UDP-N-acetylmuramate--L-alanine ligase (Streptococcus pneumoniae (strain Hungary19A-6)).